A 156-amino-acid chain; its full sequence is Arginine repressor (156 aa).

Belongs to the ArgR family.

It localises to the cytoplasm. The protein operates within amino-acid biosynthesis; L-arginine biosynthesis [regulation]. Regulates arginine biosynthesis genes. This Shigella boydii serotype 18 (strain CDC 3083-94 / BS512) protein is Arginine repressor.